The chain runs to 226 residues: MLTCLQRDSLSFPPLERALHQPNGLLAVGGDLSAERLIQAYRHGCFPWYQAGQPILWWSPDPRTVLFPRELHVSRSLRKVLRQERFQVSFDRDFAAVIQACAGPRDYADGTWITPEMRKAYQELHHRGIAHSVEVWQNGVLVGGLYGLAIGQLFFGESMFSHADNASKVGFATLVERLERWGFVLIDCQMPTQHLQSLGARSIPRTEFSDYLMHHLDLPSTADWIA.

This sequence belongs to the L/F-transferase family.

Its subcellular location is the cytoplasm. It catalyses the reaction N-terminal L-lysyl-[protein] + L-leucyl-tRNA(Leu) = N-terminal L-leucyl-L-lysyl-[protein] + tRNA(Leu) + H(+). It carries out the reaction N-terminal L-arginyl-[protein] + L-leucyl-tRNA(Leu) = N-terminal L-leucyl-L-arginyl-[protein] + tRNA(Leu) + H(+). The enzyme catalyses L-phenylalanyl-tRNA(Phe) + an N-terminal L-alpha-aminoacyl-[protein] = an N-terminal L-phenylalanyl-L-alpha-aminoacyl-[protein] + tRNA(Phe). In terms of biological role, functions in the N-end rule pathway of protein degradation where it conjugates Leu, Phe and, less efficiently, Met from aminoacyl-tRNAs to the N-termini of proteins containing an N-terminal arginine or lysine. This chain is Leucyl/phenylalanyl-tRNA--protein transferase, found in Azotobacter vinelandii (strain DJ / ATCC BAA-1303).